A 463-amino-acid polypeptide reads, in one-letter code: L-seryl-tRNA(Sec) selenium transferase (463 aa).

The residue at position 295 (K295) is an N6-(pyridoxal phosphate)lysine.

It belongs to the SelA family. In terms of assembly, homodecamer; pentamer of dimers. Binds only one seryl-tRNA(Sec) per dimer. The cofactor is pyridoxal 5'-phosphate.

The protein resides in the cytoplasm. The catalysed reaction is L-seryl-tRNA(Sec) + selenophosphate + H(+) = L-selenocysteinyl-tRNA(Sec) + phosphate. It functions in the pathway aminoacyl-tRNA biosynthesis; selenocysteinyl-tRNA(Sec) biosynthesis; selenocysteinyl-tRNA(Sec) from L-seryl-tRNA(Sec) (bacterial route): step 1/1. Functionally, converts seryl-tRNA(Sec) to selenocysteinyl-tRNA(Sec) required for selenoprotein biosynthesis. The polypeptide is L-seryl-tRNA(Sec) selenium transferase (Escherichia fergusonii (strain ATCC 35469 / DSM 13698 / CCUG 18766 / IAM 14443 / JCM 21226 / LMG 7866 / NBRC 102419 / NCTC 12128 / CDC 0568-73)).